We begin with the raw amino-acid sequence, 155 residues long: 2-C-methyl-D-erythritol 2,4-cyclodiphosphate synthase (155 aa).

The a divalent metal cation site is built by D8 and H10. Residues 8–10 and 34–35 contribute to the 4-CDP-2-C-methyl-D-erythritol 2-phosphate site; these read DVH and HS. H42 provides a ligand contact to a divalent metal cation. Residues 56–58, 61–65, 100–106, 132–135, F139, and K142 contribute to the 4-CDP-2-C-methyl-D-erythritol 2-phosphate site; these read DIG, FPDSD, AQKPKML, and TTEE.

The protein belongs to the IspF family. Homotrimer. A divalent metal cation serves as cofactor.

The enzyme catalyses 4-CDP-2-C-methyl-D-erythritol 2-phosphate = 2-C-methyl-D-erythritol 2,4-cyclic diphosphate + CMP. Its pathway is isoprenoid biosynthesis; isopentenyl diphosphate biosynthesis via DXP pathway; isopentenyl diphosphate from 1-deoxy-D-xylulose 5-phosphate: step 4/6. Its function is as follows. Involved in the biosynthesis of isopentenyl diphosphate (IPP) and dimethylallyl diphosphate (DMAPP), two major building blocks of isoprenoid compounds. Catalyzes the conversion of 4-diphosphocytidyl-2-C-methyl-D-erythritol 2-phosphate (CDP-ME2P) to 2-C-methyl-D-erythritol 2,4-cyclodiphosphate (ME-CPP) with a corresponding release of cytidine 5-monophosphate (CMP). This Clostridium botulinum (strain Kyoto / Type A2) protein is 2-C-methyl-D-erythritol 2,4-cyclodiphosphate synthase.